Reading from the N-terminus, the 203-residue chain is Urease accessory protein UreG (203 aa).

A GTP-binding site is contributed by glycine 14 to threonine 21.

It belongs to the SIMIBI class G3E GTPase family. UreG subfamily. In terms of assembly, homodimer. UreD, UreF and UreG form a complex that acts as a GTP-hydrolysis-dependent molecular chaperone, activating the urease apoprotein by helping to assemble the nickel containing metallocenter of UreC. The UreE protein probably delivers the nickel.

The protein resides in the cytoplasm. Facilitates the functional incorporation of the urease nickel metallocenter. This process requires GTP hydrolysis, probably effectuated by UreG. The protein is Urease accessory protein UreG of Rhizobium leguminosarum bv. trifolii (strain WSM2304).